Reading from the N-terminus, the 172-residue chain is Thioredoxin Y1, chloroplastic (172 aa).

The N-terminal 62 residues, 1-62 (MASISLSSST…SSTTRCTPRR (62 aa)), are a transit peptide targeting the chloroplast. The Thioredoxin domain maps to 63 to 169 (IEAKKQTFDS…LIQRIEDSLK (107 aa)). Catalysis depends on nucleophile residues cysteine 93 and cysteine 96. Residues cysteine 93 and cysteine 96 are joined by a disulfide bond.

Belongs to the thioredoxin family. Plant Y-type subfamily. Expressed in roots and seeds.

The protein localises to the plastid. It is found in the chloroplast stroma. Its function is as follows. Thiol-disulfide oxidoreductase that poorly activates chloroplastic malate dehydrogenase (NADP-MDH) and fructose-1,6-bisphosphatase. Provides reducing equivalents for peroxiredoxin Q. The polypeptide is Thioredoxin Y1, chloroplastic (Arabidopsis thaliana (Mouse-ear cress)).